We begin with the raw amino-acid sequence, 633 residues long: tRNA uridine 5-carboxymethylaminomethyl modification enzyme MnmG (633 aa).

Residues 15–20, Ile127, and Ser182 each bind FAD; that span reads GAGHAG. 276-290 provides a ligand contact to NAD(+); sequence GPRYCPSIEDKIVRF. Gln373 provides a ligand contact to FAD.

Belongs to the MnmG family. Homodimer. Heterotetramer of two MnmE and two MnmG subunits. The cofactor is FAD.

Its subcellular location is the cytoplasm. In terms of biological role, NAD-binding protein involved in the addition of a carboxymethylaminomethyl (cmnm) group at the wobble position (U34) of certain tRNAs, forming tRNA-cmnm(5)s(2)U34. The chain is tRNA uridine 5-carboxymethylaminomethyl modification enzyme MnmG from Streptococcus agalactiae serotype Ia (strain ATCC 27591 / A909 / CDC SS700).